The chain runs to 232 residues: Orotidine 5'-phosphate decarboxylase (232 aa).

Substrate contacts are provided by residues aspartate 11, lysine 33, aspartate 60–threonine 69, threonine 119, arginine 180, glutamine 189, glycine 209, and arginine 210. Lysine 62 (proton donor) is an active-site residue.

This sequence belongs to the OMP decarboxylase family. Type 1 subfamily. As to quaternary structure, homodimer.

It catalyses the reaction orotidine 5'-phosphate + H(+) = UMP + CO2. It functions in the pathway pyrimidine metabolism; UMP biosynthesis via de novo pathway; UMP from orotate: step 2/2. Functionally, catalyzes the decarboxylation of orotidine 5'-monophosphate (OMP) to uridine 5'-monophosphate (UMP). This chain is Orotidine 5'-phosphate decarboxylase, found in Nitrosococcus oceani (strain ATCC 19707 / BCRC 17464 / JCM 30415 / NCIMB 11848 / C-107).